We begin with the raw amino-acid sequence, 565 residues long: Periplasmic trehalase (565 aa).

The first 30 residues, methionine 1–alanine 30, serve as a signal peptide directing secretion. Substrate contacts are provided by residues arginine 152, tryptophan 159–aspartate 160, asparagine 196, arginine 205–glutamine 207, arginine 277–glutamate 279, and glycine 310. Residues aspartate 312 and glutamate 496 each act as proton donor/acceptor in the active site. Glutamate 511 is a substrate binding site. The tract at residues cysteine 539–proline 565 is disordered.

It belongs to the glycosyl hydrolase 37 family. Monomer.

The protein resides in the periplasm. The enzyme catalyses alpha,alpha-trehalose + H2O = alpha-D-glucose + beta-D-glucose. Functionally, provides the cells with the ability to utilize trehalose at high osmolarity by splitting it into glucose molecules that can subsequently be taken up by the phosphotransferase-mediated uptake system. The protein is Periplasmic trehalase of Escherichia coli O45:K1 (strain S88 / ExPEC).